The primary structure comprises 70 residues: Protein SlyX homolog (70 aa).

The protein belongs to the SlyX family.

This Shewanella frigidimarina (strain NCIMB 400) protein is Protein SlyX homolog.